Reading from the N-terminus, the 103-residue chain is Pyrimidine/purine nucleoside phosphorylase (103 aa).

The protein belongs to the nucleoside phosphorylase PpnP family.

The enzyme catalyses a purine D-ribonucleoside + phosphate = a purine nucleobase + alpha-D-ribose 1-phosphate. The catalysed reaction is adenosine + phosphate = alpha-D-ribose 1-phosphate + adenine. It catalyses the reaction cytidine + phosphate = cytosine + alpha-D-ribose 1-phosphate. It carries out the reaction guanosine + phosphate = alpha-D-ribose 1-phosphate + guanine. The enzyme catalyses inosine + phosphate = alpha-D-ribose 1-phosphate + hypoxanthine. The catalysed reaction is thymidine + phosphate = 2-deoxy-alpha-D-ribose 1-phosphate + thymine. It catalyses the reaction uridine + phosphate = alpha-D-ribose 1-phosphate + uracil. It carries out the reaction xanthosine + phosphate = alpha-D-ribose 1-phosphate + xanthine. Functionally, catalyzes the phosphorolysis of diverse nucleosides, yielding D-ribose 1-phosphate and the respective free bases. Can use uridine, adenosine, guanosine, cytidine, thymidine, inosine and xanthosine as substrates. Also catalyzes the reverse reactions. The polypeptide is Pyrimidine/purine nucleoside phosphorylase (Cupriavidus metallidurans (strain ATCC 43123 / DSM 2839 / NBRC 102507 / CH34) (Ralstonia metallidurans)).